A 421-amino-acid chain; its full sequence is ATP-dependent RNA helicase RhlB (421 aa).

The short motif at 9–37 (QKFSDFALHPAVIEALEKKGFHNCTPIQA) is the Q motif element. Residues 40–219 (LPLTLEGRDV…FEQMNNAEYV (180 aa)) form the Helicase ATP-binding domain. ATP is bound at residue 53-60 (AQTGTGKT). The DEAD box motif lies at 165–168 (DEAD). The Helicase C-terminal domain maps to 245 to 390 (RLLQTLLEEE…VSKYNPDALM (146 aa)). Positions 396–421 (PLRLTRARPGNGPRRNGPPRNRRRSG) are disordered. Low complexity predominate over residues 403–414 (RPGNGPRRNGPP).

The protein belongs to the DEAD box helicase family. RhlB subfamily. Component of the RNA degradosome, which is a multiprotein complex involved in RNA processing and mRNA degradation.

The protein resides in the cytoplasm. It carries out the reaction ATP + H2O = ADP + phosphate + H(+). Its function is as follows. DEAD-box RNA helicase involved in RNA degradation. Has RNA-dependent ATPase activity and unwinds double-stranded RNA. The protein is ATP-dependent RNA helicase RhlB of Klebsiella pneumoniae (strain 342).